Here is a 493-residue protein sequence, read N- to C-terminus: Dipeptide and tripeptide permease B (493 aa).

The Cytoplasmic portion of the chain corresponds to 1-27 (MERSTPTGLLQQPKPFFMIFFVELWER). The helical transmembrane segment at 28 to 48 (FGYYGVQGILAVFFVQQLGFS) threads the bilayer. Over 49 to 52 (QEQA) the chain is Periplasmic. Residues 53-73 (FVTFGAFAALVYGLISIGGYV) form a helical membrane-spanning segment. The Cytoplasmic segment spans residues 74 to 82 (GDHLLGTKR). Residues 83 to 103 (TMVLGAVVLAAGYFATGLSLY) form a helical membrane-spanning segment. The Periplasmic portion of the chain corresponds to 104–106 (QPN). The chain crosses the membrane as a helical span at residues 107–127 (LIFFALGTIAVGNGLFKANPA). At 128–146 (SLLSKCYPPKDPRLDGAFT) the chain is on the cytoplasmic side. Residues 147–167 (LFYMSINIGSLLSLSLAPVIA) traverse the membrane as a helical segment. At 168-169 (ER) the chain is on the periplasmic side. Residues 170–190 (FGYTVTYYLCGIGLIFALLVY) form a helical membrane-spanning segment. The Cytoplasmic portion of the chain corresponds to 191–212 (FCCRHMVRHIGSEPDTKPLNWR). Transmembrane regions (helical) follow at residues 213 to 233 (NLLL…WLMN) and 234 to 254 (HVFI…FIFF). Residues 255–267 (REASKQDRLGRNK) are Cytoplasmic-facing. A helical transmembrane segment spans residues 268 to 288 (MFVAFILMIEAIVFYVLYAQM). At 289–311 (PTSLNFFAINNVHHEILGFSINP) the chain is on the periplasmic side. A helical membrane pass occupies residues 312–332 (VSFQALNPFWVVVASPILASI). At 333-350 (YTRLGSQNRDLSMPAKFT) the chain is on the cytoplasmic side. A helical membrane pass occupies residues 351 to 371 (LGMFLCSLGFLTAAAAGMWFA). Over 372–379 (DAQGLTSP) the chain is Periplasmic. Residues 380–400 (WFIVLVYLFQSLGELMISALG) traverse the membrane as a helical segment. The Cytoplasmic portion of the chain corresponds to 401–424 (LAMVAALVPQYLMGFILGMWFLTQ). A helical transmembrane segment spans residues 425–445 (AASFLIGGYVATFTATPEGMT). Topologically, residues 446 to 456 (DPLETLPIYTD) are periplasmic. Residues 457-477 (VFGKIGMVTLVIALVMALLIP) form a helical membrane-spanning segment. Residues 478 to 493 (WLNRMINSSAAEDAVA) lie on the Cytoplasmic side of the membrane.

Belongs to the major facilitator superfamily. Proton-dependent oligopeptide transporter (POT/PTR) (TC 2.A.17) family. DtpB subfamily.

The protein localises to the cell inner membrane. Functionally, proton-dependent permease that transports di- and tripeptides. In Yersinia enterocolitica serotype O:8 / biotype 1B (strain NCTC 13174 / 8081), this protein is Dipeptide and tripeptide permease B.